Reading from the N-terminus, the 477-residue chain is Bifunctional protein HldE (477 aa).

Residues Met-1–Thr-318 form a ribokinase region. The residue at position 179 (Lys-179) is an N6-acetyllysine. Asn-195–Glu-198 lines the ATP pocket. Asp-264 is an active-site residue. The interval Met-344–Gly-477 is cytidylyltransferase.

In the N-terminal section; belongs to the carbohydrate kinase PfkB family. It in the C-terminal section; belongs to the cytidylyltransferase family. As to quaternary structure, homodimer.

The catalysed reaction is D-glycero-beta-D-manno-heptose 7-phosphate + ATP = D-glycero-beta-D-manno-heptose 1,7-bisphosphate + ADP + H(+). The enzyme catalyses D-glycero-beta-D-manno-heptose 1-phosphate + ATP + H(+) = ADP-D-glycero-beta-D-manno-heptose + diphosphate. Its pathway is nucleotide-sugar biosynthesis; ADP-L-glycero-beta-D-manno-heptose biosynthesis; ADP-L-glycero-beta-D-manno-heptose from D-glycero-beta-D-manno-heptose 7-phosphate: step 1/4. It functions in the pathway nucleotide-sugar biosynthesis; ADP-L-glycero-beta-D-manno-heptose biosynthesis; ADP-L-glycero-beta-D-manno-heptose from D-glycero-beta-D-manno-heptose 7-phosphate: step 3/4. In terms of biological role, catalyzes the phosphorylation of D-glycero-D-manno-heptose 7-phosphate at the C-1 position to selectively form D-glycero-beta-D-manno-heptose-1,7-bisphosphate. Functionally, catalyzes the ADP transfer from ATP to D-glycero-beta-D-manno-heptose 1-phosphate, yielding ADP-D-glycero-beta-D-manno-heptose. The protein is Bifunctional protein HldE of Shigella dysenteriae serotype 1 (strain Sd197).